The sequence spans 411 residues: Adenylosuccinate synthetase (411 aa).

Residues 11–17 (GDEGKGK) and 39–41 (GHT) contribute to the GTP site. Asp12 functions as the Proton acceptor in the catalytic mechanism. Positions 12 and 39 each coordinate Mg(2+). IMP-binding positions include 12–15 (DEGK), 37–40 (NAGH), Thr121, Arg135, Gln215, Thr230, and Arg294. His40 acts as the Proton donor in catalysis. 290-296 (TTTKRPR) is a binding site for substrate. Residues Arg296, 322 to 324 (KLD), and 400 to 402 (STS) contribute to the GTP site.

It belongs to the adenylosuccinate synthetase family. In terms of assembly, homodimer. The cofactor is Mg(2+).

Its subcellular location is the cytoplasm. The enzyme catalyses IMP + L-aspartate + GTP = N(6)-(1,2-dicarboxyethyl)-AMP + GDP + phosphate + 2 H(+). The protein operates within purine metabolism; AMP biosynthesis via de novo pathway; AMP from IMP: step 1/2. In terms of biological role, plays an important role in the de novo pathway of purine nucleotide biosynthesis. Catalyzes the first committed step in the biosynthesis of AMP from IMP. The protein is Adenylosuccinate synthetase of Helicobacter pylori (strain P12).